Consider the following 164-residue polypeptide: Phosphopantetheine adenylyltransferase (164 aa).

Serine 9 lines the substrate pocket. Residues 9-10 (SF) and histidine 17 contribute to the ATP site. Substrate contacts are provided by lysine 41, alanine 78, and arginine 92. Residues 93 to 95 (GLR), glutamate 103, and 128 to 134 (SRPITAT) contribute to the ATP site.

It belongs to the bacterial CoaD family. As to quaternary structure, homohexamer. It depends on Mg(2+) as a cofactor.

It localises to the cytoplasm. The enzyme catalyses (R)-4'-phosphopantetheine + ATP + H(+) = 3'-dephospho-CoA + diphosphate. Its pathway is cofactor biosynthesis; coenzyme A biosynthesis; CoA from (R)-pantothenate: step 4/5. Reversibly transfers an adenylyl group from ATP to 4'-phosphopantetheine, yielding dephospho-CoA (dPCoA) and pyrophosphate. The chain is Phosphopantetheine adenylyltransferase from Allorhizobium ampelinum (strain ATCC BAA-846 / DSM 112012 / S4) (Agrobacterium vitis (strain S4)).